Consider the following 208-residue polypeptide: Single-stranded DNA-binding protein DdrA (208 aa).

Belongs to the RAD52 family. In terms of assembly, homooligomer composed of 8 to 10 subunits; probably arranged in a ring-structure.

In terms of biological role, ssDNA-binding protein that contributes to the ionizing radiation resistance of D.radiodurans. Plays a role in DNA repair and genome reconstitution, in a RecA-independent process, since DdrA is essential for recovery from severe genomic fragmentation as a result of exposure to severe levels of ionizing radiation in an environment lacking nutrients. In vitro, binds to the 3'-ends of single-stranded DNA, protecting them from nuclease degradation. Thus, DdrA is part of a DNA end-protection system that helps to preserve genome integrity following irradiation or desiccation. Does not display DNA strand annealing activity, unlike eukaryotic Rad52 protein homologs. In Deinococcus radiodurans (strain ATCC 13939 / DSM 20539 / JCM 16871 / CCUG 27074 / LMG 4051 / NBRC 15346 / NCIMB 9279 / VKM B-1422 / R1), this protein is Single-stranded DNA-binding protein DdrA (ddrA).